The primary structure comprises 459 residues: MPPWAAALALLLAALALLLLRPWKRAVGARTSVRDHEEQEVASGGPADQFSDRREALPGGCSLICKPSALAQCLLRALRRSAALEPSPRSWLSGPHLQTFCHFILPVGPGPELAREYLQLADDGLVALDWVIGPCARGRRVTNPGSLPPVLLVIPNAWGRLTRNVLGLCLLALERGYYPVIFHRRGHHGCPLVSPRLQPFGDPSDLKEAVTYIRFRHPAAPLFAVSEGSGSALLLSYLGECGSSSYVTGAACISPVLRCREWFEAGLPWPYERGFLLHQKISLSRYASALEDTVDTGKLFRSGSLREFEETLFCHTKSCPISWDTYWDLNDPLRDVDEAAVPVLCICSADDPVCGPPEHTLPAELFHSNPYFFLLLSHHGGHCGFLRPEPLPAWSHEVILESFRALTEFFRMEERMKGLSRRRTSFLGGRRRWGGLQKREVSPSSNLEEIFNWKRSYTR.

The N-terminal stretch at 1 to 28 is a signal peptide; it reads MPPWAAALALLLAALALLLLRPWKRAVG. Catalysis depends on charge relay system residues Asp351 and His382. Ser425 is modified (phosphoserine).

It belongs to the AB hydrolase superfamily. AB hydrolase 4 family. In terms of assembly, interacts with PDE3B; this interaction regulates PDE3B's stability and expression and, thereby, impacts the antilipolytic action of insulin. In terms of tissue distribution, mainly expressed in adipocytes and adipose depots, followed by a weak expression in liver and pancreas. In white adipose tissue (WAT), only expressed in mature adipocytes and primary adipocytes differentiated from stromal vascular cells (SVCs), but not in undifferentiated SVCs.

The protein localises to the secreted. In terms of biological role, may regulate adipocyte lipolysis and liver lipid accumulation. The chain is Protein ABHD15 from Mus musculus (Mouse).